The primary structure comprises 309 residues: Small ribosomal subunit biogenesis GTPase RsgA (309 aa).

The CP-type G domain maps to 88-247; it reads KNLITRPPVA…IADTPGFNKP (160 aa). GTP contacts are provided by residues 137–140 and 189–197; these read TKRD and GPSGVGKSS. Positions 272, 277, 279, and 285 each coordinate Zn(2+).

Belongs to the TRAFAC class YlqF/YawG GTPase family. RsgA subfamily. Monomer. Associates with 30S ribosomal subunit, binds 16S rRNA. The cofactor is Zn(2+).

The protein localises to the cytoplasm. Its function is as follows. One of several proteins that assist in the late maturation steps of the functional core of the 30S ribosomal subunit. Helps release RbfA from mature subunits. May play a role in the assembly of ribosomal proteins into the subunit. Circularly permuted GTPase that catalyzes slow GTP hydrolysis, GTPase activity is stimulated by the 30S ribosomal subunit. This chain is Small ribosomal subunit biogenesis GTPase RsgA, found in Prochlorococcus marinus (strain SARG / CCMP1375 / SS120).